Reading from the N-terminus, the 511-residue chain is Putative thymidine phosphorylase (511 aa).

The protein belongs to the thymidine/pyrimidine-nucleoside phosphorylase family. Type 2 subfamily.

The catalysed reaction is thymidine + phosphate = 2-deoxy-alpha-D-ribose 1-phosphate + thymine. In Bradyrhizobium sp. (strain BTAi1 / ATCC BAA-1182), this protein is Putative thymidine phosphorylase.